We begin with the raw amino-acid sequence, 371 residues long: 4-hydroxy-3-methylbut-2-en-1-yl diphosphate synthase (flavodoxin) (371 aa).

Residues Cys270, Cys273, Cys305, and Glu312 each coordinate [4Fe-4S] cluster.

The protein belongs to the IspG family. It depends on [4Fe-4S] cluster as a cofactor.

It carries out the reaction (2E)-4-hydroxy-3-methylbut-2-enyl diphosphate + oxidized [flavodoxin] + H2O + 2 H(+) = 2-C-methyl-D-erythritol 2,4-cyclic diphosphate + reduced [flavodoxin]. It functions in the pathway isoprenoid biosynthesis; isopentenyl diphosphate biosynthesis via DXP pathway; isopentenyl diphosphate from 1-deoxy-D-xylulose 5-phosphate: step 5/6. Its function is as follows. Converts 2C-methyl-D-erythritol 2,4-cyclodiphosphate (ME-2,4cPP) into 1-hydroxy-2-methyl-2-(E)-butenyl 4-diphosphate. The polypeptide is 4-hydroxy-3-methylbut-2-en-1-yl diphosphate synthase (flavodoxin) (Shewanella loihica (strain ATCC BAA-1088 / PV-4)).